A 622-amino-acid polypeptide reads, in one-letter code: Probable methionine--tRNA ligase, mitochondrial (622 aa).

The 'HIGH' region signature appears at 67-79 (PIFYVNASPHVGH). The short motif at 366–370 (KMSKS) is the 'KMSKS' region element. Residue K369 participates in ATP binding. Residues 592 to 622 (LDDIKGMGPDAGSKKHSSGNKPSSGNKKPTA) are disordered. Positions 610 to 622 (GNKPSSGNKKPTA) are enriched in low complexity.

Belongs to the class-I aminoacyl-tRNA synthetase family.

It localises to the mitochondrion matrix. The enzyme catalyses tRNA(Met) + L-methionine + ATP = L-methionyl-tRNA(Met) + AMP + diphosphate. This is Probable methionine--tRNA ligase, mitochondrial from Neurospora crassa (strain ATCC 24698 / 74-OR23-1A / CBS 708.71 / DSM 1257 / FGSC 987).